Consider the following 99-residue polypeptide: Plastocyanin (99 aa).

A Plastocyanin-like domain is found at 1–99 (LDVLLGSDDG…AGMVGKVTVN (99 aa)). Positions 37, 84, 87, and 92 each coordinate Cu cation.

This sequence belongs to the plastocyanin family. Cu(2+) serves as cofactor.

The protein localises to the plastid. It localises to the chloroplast thylakoid membrane. Its function is as follows. Participates in electron transfer between P700 and the cytochrome b6-f complex in photosystem I. The polypeptide is Plastocyanin (PETE) (Mercurialis perennis (Dog's mercury)).